A 281-amino-acid polypeptide reads, in one-letter code: Ribosomal RNA large subunit methyltransferase J (281 aa).

Residues His-19, His-42, Ser-101, Glu-119, 144 to 145 (NG), and Asp-165 each bind S-adenosyl-L-methionine. Catalysis depends on Asp-165, which acts as the Proton acceptor.

It belongs to the RlmJ family. In terms of assembly, monomer.

The catalysed reaction is adenosine(2030) in 23S rRNA + S-adenosyl-L-methionine = N(6)-methyladenosine(2030) in 23S rRNA + S-adenosyl-L-homocysteine + H(+). In terms of biological role, specifically methylates the adenine in position 2030 of 23S rRNA. The chain is Ribosomal RNA large subunit methyltransferase J from Haemophilus influenzae (strain ATCC 51907 / DSM 11121 / KW20 / Rd).